A 205-amino-acid chain; its full sequence is Ribonuclease HII (205 aa).

An RNase H type-2 domain is found at 14–205 (SLISGIDEAG…SFRLKQLGEK (192 aa)). Asp20, Glu21, and Asp117 together coordinate a divalent metal cation.

It belongs to the RNase HII family. It depends on Mn(2+) as a cofactor. Mg(2+) serves as cofactor.

The protein localises to the cytoplasm. The catalysed reaction is Endonucleolytic cleavage to 5'-phosphomonoester.. Functionally, endonuclease that specifically degrades the RNA of RNA-DNA hybrids. In Chlorobium phaeobacteroides (strain DSM 266 / SMG 266 / 2430), this protein is Ribonuclease HII.